Here is a 691-residue protein sequence, read N- to C-terminus: MPAAAGDGLSESPSRFLAGEKPPVHLEETFLPACISNVSRETLRNFQHTKRVGSYLIGRKLGEGSFAKVREGLHVVTGEKVAIKVIDKKKAKKDTYVTKNLRREGQIQQMIRHPNITQLLDILETENSYYLVMELCPGGNLMHKIYEKKRLEEHEARKYIRQLILAVEHLHRAGVVHRDLKIENLLLDENNNIKLIDFGLSNCAGILGYSDPFSTQCGSPAYAAPELLARKKYGPKVDVWSIGVNMYAMLTGTLPFTVEPFSLRALYQKMVDKDMNPLPTHLSPAAISFLRSLLEPDPLKRPNIQQALANRWLNDNYHGKGLHTYPNRIHLEDLSQSVVLHMSEKLGYKHSDVINVILSNRACHTLAVYFLLNRKLEHYLVNMRKPDINDNVCHKNQFHQLEKYKMNKNSYEERRSKDLEKRGEPQQRPIQRKLDKCSPSHRQNACLTPQGHSNKGPVKERRSSKSERESFGGLSPFHEVRITKTGCMTSCSLEYLEMQSPDPRTPKIMRRQDSHSQETVNVNMGSRIRETHLNVVRSFESVNREDQIESLSPNHQYRVIGSPVSFSPRHSSERTLSPIFQFDNTSPSKSHFNQASFTYDDKSSPSSPESMSPTSPHSPSCNNNISGNLGSPNCVRSRGRFPMMGIGQMLRKRNQVVSPKGEKPLETRMPPLHQMSPGYASFNSSDMNGFC.

One can recognise a Protein kinase domain in the interval 55-313; the sequence is YLIGRKLGEG…IQQALANRWL (259 aa). Residues 61 to 69 and Lys84 contribute to the ATP site; that span reads LGEGSFAKV. Asp179 acts as the Proton acceptor in catalysis. Basic and acidic residues predominate over residues 406-425; that stretch reads MNKNSYEERRSKDLEKRGEP. 4 disordered regions span residues 406-475, 499-518, 580-640, and 655-679; these read MNKN…GGLS, QSPD…HSQE, FQFD…SRGR, and QVVS…SPGY. Polar residues predominate over residues 440–453; the sequence is SHRQNACLTPQGHS. The span at 457-470 shows a compositional bias: basic and acidic residues; it reads PVKERRSSKSERES. Over residues 582 to 597 the composition is skewed to polar residues; the sequence is FDNTSPSKSHFNQASF. The span at 604-620 shows a compositional bias: low complexity; sequence SPSSPESMSPTSPHSPS. A compositionally biased stretch (polar residues) spans 621 to 631; sequence CNNNISGNLGS.

This sequence belongs to the protein kinase superfamily. CAMK Ser/Thr protein kinase family. SNF1 subfamily.

It carries out the reaction L-seryl-[protein] + ATP = O-phospho-L-seryl-[protein] + ADP + H(+). The catalysed reaction is L-threonyl-[protein] + ATP = O-phospho-L-threonyl-[protein] + ADP + H(+). This Xenopus laevis (African clawed frog) protein is Hormonally up-regulated neu tumor-associated kinase homolog A (hunk-a).